The sequence spans 746 residues: Actin filament-associated protein 1-like 1 (746 aa).

Residues 88–206 form a disordered region; that stretch reads EDQKKEPEAN…RLTHQWPSEE (119 aa). Over residues 98–107 the composition is skewed to polar residues; the sequence is HTVTKPSKTD. The segment covering 108–119 has biased composition (pro residues); the sequence is SPPPLPNTPPPE. The span at 139–148 shows a compositional bias: low complexity; it reads SRSSSSPPNS. Residues 214–310 enclose the PH 1 domain; the sequence is DCHICAFLLR…WLHVVRDVTG (97 aa). The disordered stretch occupies residues 336–371; sequence EKQTSDSDSMPSGESARDIRENGKPKRGALSELTGT. Residues 350–359 are compositionally biased toward basic and acidic residues; the sequence is SARDIRENGK. Residues 406 to 497 enclose the PH 2 domain; the sequence is RCGYVGVLVN…WLGVLLAETG (92 aa). Disordered stretches follow at residues 539–596 and 723–746; these read EVPF…TRAQ and PSIY…KKGT. A compositionally biased stretch (polar residues) spans 562 to 575; sequence SFSSSDTGKPSPQI. Residues 591-682 adopt a coiled-coil conformation; sequence GKTRAQEDAR…VKENLKKSLA (92 aa). The segment covering 736-746 has biased composition (basic and acidic residues); sequence KAKEWESKKGT.

Its subcellular location is the cytoplasm. It localises to the cell projection. The protein localises to the podosome. It is found in the invadopodium. The protein resides in the cytoskeleton. Its subcellular location is the stress fiber. In terms of biological role, may be involved in podosome and invadosome formation. The sequence is that of Actin filament-associated protein 1-like 1 (afap1l1) from Danio rerio (Zebrafish).